The chain runs to 463 residues: Argininosuccinate lyase (463 aa).

Belongs to the lyase 1 family. Argininosuccinate lyase subfamily.

The protein localises to the cytoplasm. It carries out the reaction 2-(N(omega)-L-arginino)succinate = fumarate + L-arginine. It functions in the pathway amino-acid biosynthesis; L-arginine biosynthesis; L-arginine from L-ornithine and carbamoyl phosphate: step 3/3. The sequence is that of Argininosuccinate lyase from Thiobacillus denitrificans (strain ATCC 25259 / T1).